Consider the following 467-residue polypeptide: Glycogen synthase kinase-3 (467 aa).

Over residues Met1 to Asn20 the composition is skewed to basic and acidic residues. A disordered region spans residues Met1–Asn42. Residues Thr23 to Ser37 show a composition bias toward low complexity. In terms of domain architecture, Protein kinase spans Tyr56 to Phe339. ATP contacts are provided by residues Ile62 to Val70 and Lys85. Asp179 functions as the Proton acceptor in the catalytic mechanism. A phosphotyrosine; by zakA mark is found at Tyr214 and Tyr220. The disordered stretch occupies residues Ser400 to His467.

The protein belongs to the protein kinase superfamily. CMGC Ser/Thr protein kinase family. GSK-3 subfamily. Mg(2+) serves as cofactor.

It catalyses the reaction L-seryl-[tau protein] + ATP = O-phospho-L-seryl-[tau protein] + ADP + H(+). It carries out the reaction L-threonyl-[tau protein] + ATP = O-phospho-L-threonyl-[tau protein] + ADP + H(+). Its activity is regulated as follows. Inhibited by lithium. Lithium inhibition is competitive with respect to magnesium but non-competitive with respect to the peptide substrate. Functionally, during cellular differentiation, may mediate an extracellular cyclic AMP stimulated signal transduction pathway that regulates prespore and prestalk B-cell proportions through inhibition of stalk cell formation and induction of prespore cell differentiation. The cAMP receptor carC appears to activate gskA via the tyrosine kinases zakA and zak2, to stimulate prespore differentiation, while carD appears to negatively regulate gskA, to promote prestalk formation. In Dictyostelium discoideum (Social amoeba), this protein is Glycogen synthase kinase-3 (gskA).